A 473-amino-acid polypeptide reads, in one-letter code: High-affinity proline transporter PutP (473 aa).

12 consecutive transmembrane segments (helical) span residues 32–52 (LSAG…GAMF), 56–76 (LSGA…WLYV), 114–134 (IVIL…GGVL), 146–166 (GLWI…FLAV), 171–191 (FVQG…TFFH), 218–238 (VLGI…PHII), 256–276 (IGMG…LGGI), 299–319 (ILFH…AIMS), 350–370 (LVFL…VLAW), 376–396 (ILGL…PVVL), 408–428 (GALA…NAGL), and 431–451 (FLYE…FVSI).

It belongs to the sodium:solute symporter (SSF) (TC 2.A.21) family.

The protein resides in the cell membrane. The enzyme catalyses L-proline(in) + Na(+)(in) = L-proline(out) + Na(+)(out). Its function is as follows. Catalyzes the high-affinity uptake of extracellular proline. Important for the use of proline as a sole carbon and energy source or a sole nitrogen source. The chain is High-affinity proline transporter PutP from Bacillus subtilis (strain 168).